A 456-amino-acid polypeptide reads, in one-letter code: Outer membrane protein assembly factor BamB (456 aa).

An N-terminal signal peptide occupies residues 1 to 19; that stretch reads MKKLLFITAPLLLSVLTAS. Cys-20 carries the N-palmitoyl cysteine lipid modification. Cys-20 carries the S-diacylglycerol cysteine lipid modification.

It belongs to the BamB family. In terms of assembly, part of the Bam complex.

It localises to the cell outer membrane. Functionally, part of the outer membrane protein assembly complex, which is involved in assembly and insertion of beta-barrel proteins into the outer membrane. The chain is Outer membrane protein assembly factor BamB from Francisella tularensis subsp. tularensis (strain SCHU S4 / Schu 4).